We begin with the raw amino-acid sequence, 298 residues long: Syntaxin-4 (298 aa).

Topologically, residues 1-274 (MRDRTHELRQ…NQKKARKKKV (274 aa)) are cytoplasmic. A phosphoserine mark is found at S15, S29, S36, S117, S208, and S248. Positions 38-163 (DDEFFQKVQT…ERIRRQLKIT (126 aa)) form a coiled coil. Positions 154–298 (ERIRRQLKIT…VIIGITITVG (145 aa)) are interaction with CENPF. The 63-residue stretch at 200–262 (LNEISARHSE…ERGQEHVKIA (63 aa)) folds into the t-SNARE coiled-coil homology domain. Residues 275–295 (MIAICVSVTVLILAVIIGITI) traverse the membrane as a helical; Anchor for type IV membrane protein segment. Over 296-298 (TVG) the chain is Extracellular.

Belongs to the syntaxin family. In terms of assembly, interacts with STXBP6. Component of the SNARE complex composed of STX4, SNAP23 and VAMP7 that interacts with SYT7 during lysosomal exocytosis. Found in a complex with VAMP8 and SNAP23. Detected in a complex with SNAP23 and STXBP4. Interacts with VAMP2. Interacts with SNAP23 and SNAPIN. Interacts with LLGL1. Interacts (via C-terminus) with CENPF. Interacts with DOC2B. Interacts with STXBP3; excludes interaction with DOC2B and SNAP25. Interacts with STXBP4; excludes interaction with VAMP2. Interacts with STXBP5L. As to expression, expressed in the outer and inner hair cells of the cochlea.

It is found in the cell membrane. The protein localises to the cell projection. The protein resides in the neuron projection. Its subcellular location is the stereocilium. Functionally, plasma membrane t-SNARE that mediates docking of transport vesicles. Necessary for the translocation of SLC2A4 from intracellular vesicles to the plasma membrane. In neurons, recruited at neurite tips to membrane domains rich in the phospholipid 1-oleoyl-2-palmitoyl-PC (OPPC) which promotes neurite tip surface expression of the dopamine transporter SLC6A3/DAT by facilitating fusion of SLC6A3-containing transport vesicles with the plasma membrane. Together with STXB3 and VAMP2, may also play a role in docking/fusion of intracellular GLUT4-containing vesicles with the cell surface in adipocytes and in docking of synaptic vesicles at presynaptic active zones. Required for normal hearing. The sequence is that of Syntaxin-4 (Stx4) from Mus musculus (Mouse).